The primary structure comprises 332 residues: Putative D-threonate 4-phosphate dehydrogenase (332 aa).

2 residues coordinate substrate: His-138 and Thr-139. Residues His-168, His-211, and His-266 each contribute to the a divalent metal cation site. The substrate site is built by Lys-274 and Arg-292.

This sequence belongs to the PdxA family. PdxA2 subfamily. In terms of assembly, homodimer. A divalent metal cation serves as cofactor.

The catalysed reaction is 4-O-phospho-D-threonate + NAD(+) = dihydroxyacetone phosphate + CO2 + NADH. Functionally, catalyzes the NAD-dependent oxidation and subsequent decarboxylation of D-threonate 4-phosphate to produce dihydroxyacetone phosphate (DHAP). The polypeptide is Putative D-threonate 4-phosphate dehydrogenase (Fusobacterium nucleatum subsp. nucleatum (strain ATCC 25586 / DSM 15643 / BCRC 10681 / CIP 101130 / JCM 8532 / KCTC 2640 / LMG 13131 / VPI 4355)).